Reading from the N-terminus, the 458-residue chain is Vasoactive intestinal polypeptide receptor 1 (458 aa).

Residues 1–31 form the signal peptide; that stretch reads MRPLSPPPAGWFCVLAGVLACVLGPVGSWAV. Over 32–142 the chain is Extracellular; that stretch reads GLQQEECDYL…DEQQTVFYNS (111 aa). Disulfide bonds link Cys-38–Cys-209, Cys-51–Cys-73, Cys-64–Cys-106, Cys-87–Cys-123, and Cys-216–Cys-286. 4 N-linked (GlcNAc...) asparagine glycosylation sites follow: Asn-59, Asn-70, Asn-101, and Asn-105. A helical membrane pass occupies residues 143-167; it reads VKTGYTIGYSLSLAALLVATAILSL. At 168–175 the chain is on the cytoplasmic side; sequence FRKLHCTR. The helical transmembrane segment at 176–197 threads the bilayer; that stretch reads NYIHMHLFISFILRATAVFIKD. Over 198-217 the chain is Extracellular; that stretch reads LALFDSEESDHCSKGSVGCK. A helical transmembrane segment spans residues 218–242; it reads AAVVLFQYCVMANFFWLLVEGLYLH. Over 243–255 the chain is Cytoplasmic; that stretch reads TLLAVSFFSERKY. A helical membrane pass occupies residues 256–277; the sequence is FWGYIFVGWGVPSTFIMVWTVV. Topologically, residues 278 to 292 are extracellular; the sequence is RIHFEDYGCWDTIHS. Residues 293-317 traverse the membrane as a helical segment; the sequence is SLWWIIKAPILASILVNFILFIRII. Residues 318–339 lie on the Cytoplasmic side of the membrane; it reads GILVQKLRPPDVGKSDNSPYSR. Residues 340–360 form a helical membrane-spanning segment; the sequence is LAKSTLLLIPLFGVHYIMFAF. Topologically, residues 361–368 are extracellular; sequence FPDNFKAE. Residues 369 to 392 traverse the membrane as a helical segment; it reads VKMVFELIVGSFQGCVVAILYCFL. At 393 to 458 the chain is on the cytoplasmic side; sequence NGEVQAELRR…SSFQAEVSLV (66 aa).

This sequence belongs to the G-protein coupled receptor 2 family. Interacts with ADCYAP1/PACAP; activated by both PACAP27 and PACAP38 neuropeptides. Interacts with VIP; the interaction results in VIPR1 activation.

The protein resides in the cell membrane. Functionally, g protein-coupled receptor activated by the neuropeptides vasoactive intestinal peptide (VIP) and pituitary adenylate cyclase-activating polypeptide (ADCYAP1/PACAP). Binds VIP and both PACAP27 and PACAP38 bioactive peptides with the following order of ligand affinity VIP = PACAP27 &gt; PACAP38. Ligand binding causes a conformation change that triggers signaling via guanine nucleotide-binding proteins (G proteins) and modulates the activity of downstream effectors. Activates cAMP-dependent pathway. The sequence is that of Vasoactive intestinal polypeptide receptor 1 (VIPR1) from Sus scrofa (Pig).